The sequence spans 486 residues: Glycogen synthase (486 aa).

Lys20 contributes to the ADP-alpha-D-glucose binding site.

Belongs to the glycosyltransferase 1 family. Bacterial/plant glycogen synthase subfamily.

The catalysed reaction is [(1-&gt;4)-alpha-D-glucosyl](n) + ADP-alpha-D-glucose = [(1-&gt;4)-alpha-D-glucosyl](n+1) + ADP + H(+). It participates in glycan biosynthesis; glycogen biosynthesis. Functionally, synthesizes alpha-1,4-glucan chains using ADP-glucose. The sequence is that of Glycogen synthase from Aeromonas salmonicida (strain A449).